A 106-amino-acid chain; its full sequence is Protein Rev (106 aa).

Positions 8–16 (VIKFLYQSN) are homomultimerization. The interval 13–36 (YQSNPPPRPEGTRQARRNRRRRWR) is disordered. The Nuclear localization signal and RNA-binding (RRE) signature appears at 24–40 (TRQARRNRRRRWRARQR). Basic residues predominate over residues 26–36 (QARRNRRRRWR). A Nuclear export signal and binding to XPO1 motif is present at residues 63-74 (LQLPPLERLTLD). Phosphoserine; by host is present on residues S82 and S89.

It belongs to the HIV-1 REV protein family. Homomultimer; when bound to the RRE. Multimeric assembly is essential for activity and may involve XPO1. Binds to human KPNB1, XPO1, TNPO1, RANBP5 and IPO7. Interacts with the viral Integrase. Interacts with human KHDRBS1. Interacts with human NAP1; this interaction decreases Rev multimerization and stimulates its activity. Interacts with human DEAD-box helicases DDX3 and DDX24; these interactions may serve for viral RNA export to the cytoplasm and packaging, respectively. Interacts with human PSIP1; this interaction may inhibit HIV-1 DNA integration by promoting dissociation of the Integrase-LEDGF/p75 complex. In terms of processing, asymmetrically arginine dimethylated at one site by host PRMT6. Methylation impairs the RNA-binding activity and export of viral RNA from the nucleus to the cytoplasm. Post-translationally, phosphorylated by protein kinase CK2. Presence of, and maybe binding to the N-terminus of the regulatory beta subunit of CK2 is necessary for CK2-mediated Rev's phosphorylation.

It localises to the host nucleus. The protein resides in the host nucleolus. It is found in the host cytoplasm. Functionally, escorts unspliced or incompletely spliced viral pre-mRNAs (late transcripts) out of the nucleus of infected cells. These pre-mRNAs carry a recognition sequence called Rev responsive element (RRE) located in the env gene, that is not present in fully spliced viral mRNAs (early transcripts). This function is essential since most viral proteins are translated from unspliced or partially spliced pre-mRNAs which cannot exit the nucleus by the pathway used by fully processed cellular mRNAs. Rev itself is translated from a fully spliced mRNA that readily exits the nucleus. Rev's nuclear localization signal (NLS) binds directly to KPNB1/Importin beta-1 without previous binding to KPNA1/Importin alpha-1. KPNB1 binds to the GDP bound form of RAN (Ran-GDP) and targets Rev to the nucleus. In the nucleus, the conversion from Ran-GDP to Ran-GTP dissociates Rev from KPNB1 and allows Rev's binding to the RRE in viral pre-mRNAs. Rev multimerization on the RRE via cooperative assembly exposes its nuclear export signal (NES) to the surface. Rev can then form a complex with XPO1/CRM1 and Ran-GTP, leading to nuclear export of the complex. Conversion from Ran-GTP to Ran-GDP mediates dissociation of the Rev/RRE/XPO1/RAN complex, so that Rev can return to the nucleus for a subsequent round of export. Beside KPNB1, also seems to interact with TNPO1/Transportin-1, RANBP5/IPO5 and IPO7/RANBP7 for nuclear import. The nucleoporin-like HRB/RIP is an essential cofactor that probably indirectly interacts with Rev to release HIV RNAs from the perinuclear region to the cytoplasm. The chain is Protein Rev from Homo sapiens (Human).